Consider the following 100-residue polypeptide: MELTPREKDKLLLFTAGLVAERRLARGLKLNYPEAVALISCAIMEGARDGKTVAQLMSEGRTLLTAEQVMEGVPEMIKDIQVECTFPDGTKLVSIHDPIV.

It belongs to the urease gamma subunit family. Heterotrimer of UreA (gamma), UreB (beta) and UreC (alpha) subunits. Three heterotrimers associate to form the active enzyme.

The protein localises to the cytoplasm. It catalyses the reaction urea + 2 H2O + H(+) = hydrogencarbonate + 2 NH4(+). The protein operates within nitrogen metabolism; urea degradation; CO(2) and NH(3) from urea (urease route): step 1/1. The protein is Urease subunit gamma of Escherichia coli.